A 166-amino-acid chain; its full sequence is CDP-archaeol synthase (166 aa).

Transmembrane regions (helical) follow at residues 7–27, 55–75, 78–98, 116–136, and 138–158; these read LLLS…GPFI, LIVA…FFTA, TLIS…GAFI, LDFV…ITWY, and FLFI…VAYL.

The protein belongs to the CDP-archaeol synthase family. Mg(2+) is required as a cofactor.

It is found in the cell membrane. It carries out the reaction 2,3-bis-O-(geranylgeranyl)-sn-glycerol 1-phosphate + CTP + H(+) = CDP-2,3-bis-O-(geranylgeranyl)-sn-glycerol + diphosphate. It functions in the pathway membrane lipid metabolism; glycerophospholipid metabolism. In terms of biological role, catalyzes the formation of CDP-2,3-bis-(O-geranylgeranyl)-sn-glycerol (CDP-archaeol) from 2,3-bis-(O-geranylgeranyl)-sn-glycerol 1-phosphate (DGGGP) and CTP. This reaction is the third ether-bond-formation step in the biosynthesis of archaeal membrane lipids. The protein is CDP-archaeol synthase of Saccharolobus islandicus (strain Y.N.15.51 / Yellowstone #2) (Sulfolobus islandicus).